Consider the following 206-residue polypeptide: Large ribosomal subunit protein uL4 (206 aa).

A disordered region spans residues 46-77 (GTRAQKDREQVKHSTKKPFKQKGTGNARAGMT).

The protein belongs to the universal ribosomal protein uL4 family. Part of the 50S ribosomal subunit.

In terms of biological role, one of the primary rRNA binding proteins, this protein initially binds near the 5'-end of the 23S rRNA. It is important during the early stages of 50S assembly. It makes multiple contacts with different domains of the 23S rRNA in the assembled 50S subunit and ribosome. Its function is as follows. Forms part of the polypeptide exit tunnel. The polypeptide is Large ribosomal subunit protein uL4 (Acidovorax ebreus (strain TPSY) (Diaphorobacter sp. (strain TPSY))).